We begin with the raw amino-acid sequence, 129 residues long: Large ribosomal subunit protein bL12 (129 aa).

This sequence belongs to the bacterial ribosomal protein bL12 family. As to quaternary structure, homodimer. Part of the ribosomal stalk of the 50S ribosomal subunit. Forms a multimeric L10(L12)X complex, where L10 forms an elongated spine to which 2 to 4 L12 dimers bind in a sequential fashion. Binds GTP-bound translation factors.

Forms part of the ribosomal stalk which helps the ribosome interact with GTP-bound translation factors. Is thus essential for accurate translation. This chain is Large ribosomal subunit protein bL12, found in Pseudothermotoga lettingae (strain ATCC BAA-301 / DSM 14385 / NBRC 107922 / TMO) (Thermotoga lettingae).